The following is a 101-amino-acid chain: Urease subunit gamma (101 aa).

This sequence belongs to the urease gamma subunit family. As to quaternary structure, heterotrimer of UreA (gamma), UreB (beta) and UreC (alpha) subunits. Three heterotrimers associate to form the active enzyme.

It localises to the cytoplasm. The catalysed reaction is urea + 2 H2O + H(+) = hydrogencarbonate + 2 NH4(+). It participates in nitrogen metabolism; urea degradation; CO(2) and NH(3) from urea (urease route): step 1/1. The sequence is that of Urease subunit gamma from Ureaplasma urealyticum (Ureaplasma urealyticum biotype 2).